The sequence spans 393 residues: Formate-dependent phosphoribosylglycinamide formyltransferase (393 aa).

N(1)-(5-phospho-beta-D-ribosyl)glycinamide-binding positions include 22-23 (EL) and Glu-82. ATP is bound by residues Arg-114, Lys-155, 160–165 (SSGKGQ), 195–198 (EGFI), and Glu-203. The ATP-grasp domain maps to 119 to 308 (RLAAEELDLP…QFALHARAIL (190 aa)). Residues Glu-267 and Glu-279 each coordinate Mg(2+). N(1)-(5-phospho-beta-D-ribosyl)glycinamide is bound by residues Asp-286, Lys-356, and 363–364 (RR).

Belongs to the PurK/PurT family. Homodimer.

It carries out the reaction N(1)-(5-phospho-beta-D-ribosyl)glycinamide + formate + ATP = N(2)-formyl-N(1)-(5-phospho-beta-D-ribosyl)glycinamide + ADP + phosphate + H(+). It participates in purine metabolism; IMP biosynthesis via de novo pathway; N(2)-formyl-N(1)-(5-phospho-D-ribosyl)glycinamide from N(1)-(5-phospho-D-ribosyl)glycinamide (formate route): step 1/1. Its function is as follows. Involved in the de novo purine biosynthesis. Catalyzes the transfer of formate to 5-phospho-ribosyl-glycinamide (GAR), producing 5-phospho-ribosyl-N-formylglycinamide (FGAR). Formate is provided by PurU via hydrolysis of 10-formyl-tetrahydrofolate. This Pseudomonas putida (strain ATCC 47054 / DSM 6125 / CFBP 8728 / NCIMB 11950 / KT2440) protein is Formate-dependent phosphoribosylglycinamide formyltransferase.